A 1357-amino-acid polypeptide reads, in one-letter code: Kinectin (1357 aa).

The Cytoplasmic segment spans residues 1–6 (MEFYES). Residues 7–29 (AYFIVLIPSIVITVIFLFFWLFM) traverse the membrane as a helical; Signal-anchor for type II membrane protein segment. The Lumenal segment spans residues 30–1357 (KETLYDEVLA…KEKEHYQVLE (1328 aa)). Disordered regions lie at residues 48-81 (IPTK…ESVP) and 103-218 (NVVE…KQKT). Phosphoserine; by FAM20C is present on serine 75. A Phosphoserine modification is found at serine 77. The span at 121–135 (QKPVLEEQVIKESDA) shows a compositional bias: basic and acidic residues. Residue threonine 153 is modified to Phosphothreonine. Serine 156 carries the post-translational modification Phosphoserine. The span at 161–171 (SKKKPGQKKSK) shows a compositional bias: basic residues. 5 N-linked (GlcNAc...) asparagine glycosylation sites follow: asparagine 172, asparagine 435, asparagine 772, asparagine 904, and asparagine 1055. Over residues 172-182 (NGSDDQDKKVE) the composition is skewed to basic and acidic residues. Residues 330 to 1356 (LIHQLQEKDK…TKEKEHYQVL (1027 aa)) are a coiled coil. Serine 1084 is modified (phosphoserine). N-linked (GlcNAc...) asparagine glycans are attached at residues asparagine 1088 and asparagine 1263. Serine 1313 bears the Phosphoserine mark. N-linked (GlcNAc...) asparagine glycosylation occurs at asparagine 1329.

Belongs to the kinectin family. As to quaternary structure, parallel homodimers formed between the membrane-bound and the cytosolic form, and also between 2 cytosolic forms. High levels in peripheral blood lymphocytes, testis and ovary, lower levels in spleen, thymus, prostate, small intestine and colon.

The protein resides in the endoplasmic reticulum membrane. Functionally, receptor for kinesin thus involved in kinesin-driven vesicle motility. Accumulates in integrin-based adhesion complexes (IAC) upon integrin aggregation by fibronectin. In Homo sapiens (Human), this protein is Kinectin (KTN1).